Reading from the N-terminus, the 339-residue chain is Ketol-acid reductoisomerase (NADP(+)) (339 aa).

A KARI N-terminal Rossmann domain is found at 1 to 182 (MRVYYDRDAD…GGGRSGIIET (182 aa)). NADP(+)-binding positions include 24 to 27 (YGSQ), lysine 48, serine 51, threonine 53, and 83 to 86 (DELQ). Histidine 108 is an active-site residue. Glycine 134 serves as a coordination point for NADP(+). Residues 183–328 (NFREECETDL…AKLRGMMPWI (146 aa)) form the KARI C-terminal knotted domain. The Mg(2+) site is built by aspartate 191, glutamate 195, glutamate 227, and glutamate 231. Residue serine 252 coordinates substrate.

The protein belongs to the ketol-acid reductoisomerase family. The cofactor is Mg(2+).

The catalysed reaction is (2R)-2,3-dihydroxy-3-methylbutanoate + NADP(+) = (2S)-2-acetolactate + NADPH + H(+). It carries out the reaction (2R,3R)-2,3-dihydroxy-3-methylpentanoate + NADP(+) = (S)-2-ethyl-2-hydroxy-3-oxobutanoate + NADPH + H(+). The protein operates within amino-acid biosynthesis; L-isoleucine biosynthesis; L-isoleucine from 2-oxobutanoate: step 2/4. It participates in amino-acid biosynthesis; L-valine biosynthesis; L-valine from pyruvate: step 2/4. In terms of biological role, involved in the biosynthesis of branched-chain amino acids (BCAA). Catalyzes an alkyl-migration followed by a ketol-acid reduction of (S)-2-acetolactate (S2AL) to yield (R)-2,3-dihydroxy-isovalerate. In the isomerase reaction, S2AL is rearranged via a Mg-dependent methyl migration to produce 3-hydroxy-3-methyl-2-ketobutyrate (HMKB). In the reductase reaction, this 2-ketoacid undergoes a metal-dependent reduction by NADPH to yield (R)-2,3-dihydroxy-isovalerate. This chain is Ketol-acid reductoisomerase (NADP(+)), found in Rhizobium rhizogenes (strain K84 / ATCC BAA-868) (Agrobacterium radiobacter).